The primary structure comprises 22 residues: Rothein 4.1 (22 aa).

The protein belongs to the frog skin active peptide (FSAP) family. Rothein subfamily. In terms of tissue distribution, expressed by the skin dorsal glands.

It localises to the secreted. Lacks antimicrobial activity. Does not inhibit the formation of NO by neuronal nitric oxide. This chain is Rothein 4.1, found in Litoria rothii (Roth's tree frog).